The following is a 525-amino-acid chain: Rho guanine nucleotide exchange factor gef3 (525 aa).

The DH domain occupies 72 to 268 (AIISVLEEFR…EIASQRMNEL (197 aa)).

It localises to the cytoplasm. Its function is as follows. Has a role in the control of cell polarity and cytokinesis. Involved in bipolar growth and septum formation. This Schizosaccharomyces pombe (strain 972 / ATCC 24843) (Fission yeast) protein is Rho guanine nucleotide exchange factor gef3 (gef3).